Here is a 183-residue protein sequence, read N- to C-terminus: Macro domain-containing protein (183 aa).

One can recognise a Macro domain in the interval methionine 1 to aspartate 174.

It belongs to the MacroD-type family.

The chain is Macro domain-containing protein from Acinetobacter sp. (strain ED45-25).